The following is a 173-amino-acid chain: NADH-ubiquinone oxidoreductase chain 6 (173 aa).

4 helical membrane-spanning segments follow: residues 12–32, 47–67, 94–114, and 142–162; these read VFWL…VSLV, GSFL…VIFA, VVLA…GECG, and GALM…LVLV.

Belongs to the complex I subunit 6 family.

It localises to the mitochondrion membrane. It catalyses the reaction a ubiquinone + NADH + 5 H(+)(in) = a ubiquinol + NAD(+) + 4 H(+)(out). In terms of biological role, core subunit of the mitochondrial membrane respiratory chain NADH dehydrogenase (Complex I) that is believed to belong to the minimal assembly required for catalysis. Complex I functions in the transfer of electrons from NADH to the respiratory chain. The immediate electron acceptor for the enzyme is believed to be ubiquinone. The sequence is that of NADH-ubiquinone oxidoreductase chain 6 (MT-ND6) from Pelomedusa subrufa (African side-necked turtle).